We begin with the raw amino-acid sequence, 496 residues long: L-arabinose isomerase (496 aa).

Residues Glu302, Glu329, His346, and His445 each coordinate Mn(2+).

It belongs to the arabinose isomerase family. Mn(2+) is required as a cofactor.

It catalyses the reaction beta-L-arabinopyranose = L-ribulose. It participates in carbohydrate degradation; L-arabinose degradation via L-ribulose; D-xylulose 5-phosphate from L-arabinose (bacterial route): step 1/3. Its function is as follows. Catalyzes the conversion of L-arabinose to L-ribulose. In Thermotoga sp. (strain RQ2), this protein is L-arabinose isomerase.